The primary structure comprises 783 residues: Cation/H(+) antiporter 2 (783 aa).

Helical transmembrane passes span 19-39, 43-63, 81-101, 121-141, 145-165, 186-206, 208-228, 242-262, 300-320, 323-343, 355-375, and 391-411; these read LNTMFIQMACILVFSQLFYLL, CGQAGPVAQILAGIVLSPVLL, YYSFFSFALRTSFMFLIGLEV, FVVSGLLSFASLMLFIPLFGI, YFTFFLVLLVTLSNTASPVVV, ALFIELTNVVLYTIIMAFISG, IILELFLFLLATVALILINMV, YLSKAETLVFFIFLLIIGITI, EFVLPVYFGYIGFRFSIIALT, FYLGIVIIVIVTIAGKFIGVI, YWLFLPTILSVKGHVGLLLLD, and MMVAALVITTLVSGVLASFLL.

The protein belongs to the monovalent cation:proton antiporter 2 (CPA2) transporter (TC 2.A.37) family. CHX (TC 2.A.37.4) subfamily. In terms of tissue distribution, specifically expressed in pollen.

Its subcellular location is the membrane. May operate as a cation/H(+) antiporter. In Arabidopsis thaliana (Mouse-ear cress), this protein is Cation/H(+) antiporter 2 (CHX2).